Reading from the N-terminus, the 194-residue chain is Histone H1 (194 aa).

A1 is subject to N-acetylalanine; partial. Residues 1 to 14 (AEVAPAPAAAAPAK) are compositionally biased toward low complexity. 2 disordered regions span residues 1–31 (AEVA…GPAV) and 105–194 (AKKP…AAKK). Basic residues predominate over residues 15–26 (APKKKAAAKPKK). One can recognise an H15 domain in the interval 27–100 (SGPAVGELAG…GASGSFKLNK (74 aa)). Over residues 116–194 (KAKKVAAKKP…KVKKPAAAKK (79 aa)) the composition is skewed to basic residues. Phosphoserine occurs at positions 145, 161, and 182.

The protein belongs to the histone H1/H5 family.

The protein resides in the nucleus. It is found in the chromosome. Its function is as follows. Histones H1 are necessary for the condensation of nucleosome chains into higher-order structures. This is Histone H1 from Salmo trutta (Brown trout).